The sequence spans 178 residues: MSKTGGKISFYEDRNFQGRRYDCDCDCADFRSYLSRCNSIRVEGGTWAVYERPNFSGHMYILPQGEYPEYQRWMGLNDRLGSCRAVHLSSGGQAKIQVFEKGDFNGQMYETTEDCPSIMEQFHLREIHSCKVVEGTWIFYELPNYRGRQYLLDKKEYRKPVDWGAASPAIQSFRRIVE.

Serine 2 carries the post-translational modification N-acetylserine. The segment at serine 2–glycine 5 is N-terminal arm. 2 Beta/gamma crystallin 'Greek key' domains span residues glycine 6 to glycine 44 and glycine 45 to histidine 87. The segment at leucine 88–glutamine 93 is connecting peptide. Beta/gamma crystallin 'Greek key' domains are found at residues alanine 94 to glutamate 134 and glycine 135 to valine 177.

The protein belongs to the beta/gamma-crystallin family. As to quaternary structure, monomer.

Its function is as follows. Crystallins are the dominant structural components of the vertebrate eye lens. This is Gamma-crystallin S (Crygs) from Mus musculus (Mouse).